We begin with the raw amino-acid sequence, 1010 residues long: Protein CROWDED NUCLEI 4 (1010 aa).

2 coiled-coil regions span residues 82-350 (LLLL…LIQN) and 404-763 (EKEH…NLER). 2 consecutive short sequence motifs (nuclear localization signal) follow at residues 445 to 452 (NRKTTMLE) and 679 to 686 (LKRLDAER). Disordered stretches follow at residues 787–813 (GVST…PSSA), 839–937 (HYEE…TQTP), and 966–994 (DCSE…GINA). A compositionally biased stretch (basic and acidic residues) spans 849 to 863 (EKLKLESSRREEKAY). Polar residues-rich tracts occupy residues 883–893 (NTSGDETSEPS) and 912–921 (TQSVISSPQN).

The protein belongs to the CRWN family. In terms of assembly, core component of the LINC complex which is composed of inner nuclear membrane SUN domain-containing proteins coupled to outer nuclear membrane WIP proteins, the nucleoskeletal CRWN/LINC proteins, and, possibly, KAKU4. Binds to KAKU4. Expressed at low levels in roots, leaves, flowers and flower stalks.

It is found in the nucleus membrane. The protein resides in the nucleus. Its subcellular location is the nucleoplasm. The protein localises to the nucleus lamina. It localises to the cytoplasm. In terms of biological role, component of SUN-protein-containing multivariate complexes also called LINC complexes which link the nucleoskeleton and cytoskeleton by providing versatile outer nuclear membrane attachment sites for cytoskeletal filaments. Required for nucleus structure organization (e.g. size and shape). Involved in the maintenance of interphase chromocenter integrity and organization. The chain is Protein CROWDED NUCLEI 4 from Arabidopsis thaliana (Mouse-ear cress).